Here is a 215-residue protein sequence, read N- to C-terminus: MSETVPPAPAASAAPEKPLAGKKAKKPAKAAAASKKKPAGPSVSELIVQAASSSKERGGVSLAALKKALAAAGYDVEKNNSRIKLGIKSLVSKGTLVQTKGTGASGSFKLNKKASSVETKPGASKVATKTKATGASKKLKKATGASKKSVKTPKKAKKPAATRKSSKNPKKPKTVKPKKVAKSPAKAKAVKPKAAKARVTKPKTAKPKKAAPKKK.

Residues 1–43 are disordered; sequence MSETVPPAPAASAAPEKPLAGKKAKKPAKAAAASKKKPAGPSV. S2 is subject to N-acetylserine. Phosphoserine occurs at positions 2 and 12. Position 17 is an N6-acetyllysine (K17). Basic residues predominate over residues 20–38; the sequence is AGKKAKKPAKAAAASKKKP. At K37 the chain carries N6-(beta-hydroxybutyryl)lysine. The H15 domain maps to 39-112; it reads AGPSVSELIV…GASGSFKLNK (74 aa). S44 carries the post-translational modification Phosphoserine. K55 is subject to N6-(beta-hydroxybutyryl)lysine. Residue R57 is modified to Citrulline. K67 is modified (N6-(beta-hydroxybutyryl)lysine). An N6-acetyllysine modification is found at K78. An N6-(beta-hydroxybutyryl)lysine modification is found at K88. An N6-(beta-hydroxybutyryl)lysine; alternate modification is found at K93. At K93 the chain carries N6-acetyllysine; alternate. Positions 94 to 215 are disordered; sequence GTLVQTKGTG…KPKKAAPKKK (122 aa). S107 carries the post-translational modification Phosphoserine. Residue K109 is modified to N6-(beta-hydroxybutyryl)lysine. The segment covering 122 to 147 has biased composition (low complexity); sequence GASKVATKTKATGASKKLKKATGASK. K125 is modified (N6-acetyllysine). 2 stretches are compositionally biased toward basic residues: residues 148 to 181 and 188 to 215; these read KSVK…KKVA and KAVK…PKKK. T204 is modified (phosphothreonine).

Belongs to the histone H1/H5 family. Interacts with DFFB. In terms of processing, H1 histones are progressively phosphorylated during the cell cycle, becoming maximally phosphorylated during late G2 phase and M phase, and being dephosphorylated sharply thereafter. Citrullination at Arg-57 (H1R54ci) by PADI4 takes place within the DNA-binding site of H1 and results in its displacement from chromatin and global chromatin decondensation, thereby promoting pluripotency and stem cell maintenance.

The protein resides in the nucleus. It is found in the chromosome. Histone H1 protein binds to linker DNA between nucleosomes forming the macromolecular structure known as the chromatin fiber. Histones H1 are necessary for the condensation of nucleosome chains into higher-order structured fibers. Also acts as a regulator of individual gene transcription through chromatin remodeling, nucleosome spacing and DNA methylation. The chain is Histone H1.1 from Homo sapiens (Human).